Here is a 953-residue protein sequence, read N- to C-terminus: Translation initiation factor IF-2 (953 aa).

A disordered region spans residues 53-368 (AKKAVAGTSE…PVTERKFHEL (316 aa)). Basic and acidic residues-rich tracts occupy residues 135–151 (FKAEREARAKEQAERRK) and 162–190 (RNDRNDRRNNQNDRNDRNSQNRNDRRNRQ). The segment covering 191–214 (EQGNQHRNQGQSQYNQQRQSFNQG) has biased composition (low complexity). Over residues 236–266 (RSSEERFKQAKANKEALREQNKRKEQAKLED) the composition is skewed to basic and acidic residues. The span at 274–288 (PKPTAKAPATPAPTA) shows a compositional bias: low complexity. The segment covering 301 to 318 (ARPDKERDNFDHEEDGPR) has biased composition (basic and acidic residues). The segment covering 332-341 (NQKNSNWNNN) has biased composition (low complexity). A tr-type G domain is found at 455 to 622 (ERPPVVTIMG…TVLLVAEIQE (168 aa)). The segment at 464-471 (GHVDHGKT) is G1. 464-471 (GHVDHGKT) is a GTP binding site. The tract at residues 489-493 (GITQH) is G2. Residues 510 to 513 (DTPG) are G3. Residues 510–514 (DTPGH) and 564–567 (NKID) contribute to the GTP site. Positions 564–567 (NKID) are G4. The tract at residues 600–602 (SAK) is G5.

Belongs to the TRAFAC class translation factor GTPase superfamily. Classic translation factor GTPase family. IF-2 subfamily.

It is found in the cytoplasm. One of the essential components for the initiation of protein synthesis. Protects formylmethionyl-tRNA from spontaneous hydrolysis and promotes its binding to the 30S ribosomal subunits. Also involved in the hydrolysis of GTP during the formation of the 70S ribosomal complex. The sequence is that of Translation initiation factor IF-2 from Streptococcus gordonii (strain Challis / ATCC 35105 / BCRC 15272 / CH1 / DL1 / V288).